A 715-amino-acid chain; its full sequence is Serrate RNA effector molecule homolog (715 aa).

Disordered regions lie at residues 1–87, 223–259, and 629–715; these read MDSD…YSGP, ENKD…TDKA, and EPKH…DDIP. Basic and acidic residues-rich tracts occupy residues 7 to 25, 37 to 57, and 223 to 242; these read GDRR…DSYR, YDNK…SRGD, and ENKD…VKEE. The span at 243–256 shows a compositional bias: acidic residues; sequence PNEEQEEGAIDDET. The span at 629 to 659 shows a compositional bias: basic and acidic residues; that stretch reads EPKHMPHMSRDDHRGGGGDRGYGRERDDDRG.

This sequence belongs to the ARS2 family.

Its subcellular location is the nucleus. In terms of biological role, acts as a mediator between the cap-binding complex (CBC) and the primary microRNAs (miRNAs) processing machinery. Contributes to the stability and delivery of capped primary miRNA transcripts to the primary miRNA processing complex, thereby playing a role in RNA-mediated gene silencing (RNAi) by miRNAs. This is Serrate RNA effector molecule homolog from Caenorhabditis briggsae.